A 143-amino-acid chain; its full sequence is 6,7-dimethyl-8-ribityllumazine synthase (143 aa).

5-amino-6-(D-ribitylamino)uracil is bound by residues F13, 45–47 (TFD), and 69–71 (CVI). Residue 74-75 (ET) participates in (2S)-2-hydroxy-3-oxobutyl phosphate binding. H77 acts as the Proton donor in catalysis. Residue L102 coordinates 5-amino-6-(D-ribitylamino)uracil. R117 is a binding site for (2S)-2-hydroxy-3-oxobutyl phosphate.

Belongs to the DMRL synthase family.

The catalysed reaction is (2S)-2-hydroxy-3-oxobutyl phosphate + 5-amino-6-(D-ribitylamino)uracil = 6,7-dimethyl-8-(1-D-ribityl)lumazine + phosphate + 2 H2O + H(+). It participates in cofactor biosynthesis; riboflavin biosynthesis; riboflavin from 2-hydroxy-3-oxobutyl phosphate and 5-amino-6-(D-ribitylamino)uracil: step 1/2. In terms of biological role, catalyzes the formation of 6,7-dimethyl-8-ribityllumazine by condensation of 5-amino-6-(D-ribitylamino)uracil with 3,4-dihydroxy-2-butanone 4-phosphate. This is the penultimate step in the biosynthesis of riboflavin. The chain is 6,7-dimethyl-8-ribityllumazine synthase from Archaeoglobus fulgidus (strain ATCC 49558 / DSM 4304 / JCM 9628 / NBRC 100126 / VC-16).